Here is a 71-residue protein sequence, read N- to C-terminus: Plasticin-C2 (71 aa).

Residues 1-22 (MAFLKKSLLLVLFLALVPLSIC) form the signal peptide. Residues 23–45 (EEEKREEEDEEKQEDDDQSENKR) constitute a propeptide that is removed on maturation. The interval 25–46 (EKREEEDEEKQEDDDQSENKRG) is disordered. A compositionally biased stretch (acidic residues) spans 26–40 (KREEEDEEKQEDDDQ). Asn68 carries the asparagine amide modification. Positions 70 to 71 (ES) are excised as a propeptide.

It belongs to the frog skin active peptide (FSAP) family. Plasticin subfamily. As to expression, expressed by the skin glands.

It localises to the secreted. Its subcellular location is the target cell membrane. Functionally, neutral peptide with no antimicrobial activity. May act in synergy with cationic peptides by enhancing their activity. Has a moderate hemolytic activity. In Agalychnis callidryas (Red-eyed tree frog), this protein is Plasticin-C2.